Here is a 110-residue protein sequence, read N- to C-terminus: Plasma membrane ATPase (110 aa).

Residues D72 and D76 each coordinate Mg(2+). The interval 88–110 is disordered; the sequence is APESTSLNLPNDKELSEIAEQAK. The span at 98-110 shows a compositional bias: basic and acidic residues; it reads NDKELSEIAEQAK.

It belongs to the cation transport ATPase (P-type) (TC 3.A.3) family. Type IIIA subfamily. The N-terminus is blocked.

It localises to the cell membrane. It carries out the reaction ATP + H2O + H(+)(in) = ADP + phosphate + 2 H(+)(out). In terms of biological role, the plasma membrane ATPase of plants and fungi is a hydrogen ion pump. The proton gradient it generates drives the active transport of nutrients by H(+)-symport. The resulting external acidification and/or internal alkinization may mediate growth responses. The sequence is that of Plasma membrane ATPase from Avena sativa (Oat).